Here is a 288-residue protein sequence, read N- to C-terminus: 2-hydroxy-6-oxononadienedioate/2-hydroxy-6-oxononatrienedioate hydrolase (288 aa).

One can recognise an AB hydrolase-1 domain in the interval 39–274 (LVLLHGSGPG…RCGHWAQWEH (236 aa)). Histidine 268 functions as the Proton acceptor in the catalytic mechanism.

This sequence belongs to the AB hydrolase superfamily. MhpC family. In terms of assembly, homodimer.

The enzyme catalyses (2Z,4E)-2-hydroxy-6-oxonona-2,4-dienedioate + H2O = (2Z)-2-hydroxypenta-2,4-dienoate + succinate + H(+). The catalysed reaction is (2Z,4E,7E)-2-hydroxy-6-oxonona-2,4,7-trienedioate + H2O = (2Z)-2-hydroxypenta-2,4-dienoate + fumarate + H(+). It functions in the pathway aromatic compound metabolism; 3-phenylpropanoate degradation. Its function is as follows. Catalyzes the cleavage of the C5-C6 bond of 2-hydroxy-6-oxononadienedioate and 2-hydroxy-6-oxononatrienedioate, a dienol ring fission product of the bacterial meta-cleavage pathway for degradation of phenylpropionic acid. The sequence is that of 2-hydroxy-6-oxononadienedioate/2-hydroxy-6-oxononatrienedioate hydrolase from Paraburkholderia phymatum (strain DSM 17167 / CIP 108236 / LMG 21445 / STM815) (Burkholderia phymatum).